The sequence spans 277 residues: Putative hydro-lyase SCO1412 (277 aa).

This sequence belongs to the D-glutamate cyclase family.

This is Putative hydro-lyase SCO1412 from Streptomyces coelicolor (strain ATCC BAA-471 / A3(2) / M145).